A 243-amino-acid chain; its full sequence is Adenosylcobinamide-GDP ribazoletransferase (243 aa).

The next 5 helical transmembrane spans lie at 31–48 (LLFY…LWVL), 61–81 (AALL…DGLA), 109–129 (IAVV…VALI), 134–154 (GFAL…LFLC), and 188–208 (LLLG…LFFW).

It belongs to the CobS family. The cofactor is Mg(2+).

The protein resides in the cell inner membrane. It carries out the reaction alpha-ribazole + adenosylcob(III)inamide-GDP = adenosylcob(III)alamin + GMP + H(+). It catalyses the reaction alpha-ribazole 5'-phosphate + adenosylcob(III)inamide-GDP = adenosylcob(III)alamin 5'-phosphate + GMP + H(+). The protein operates within cofactor biosynthesis; adenosylcobalamin biosynthesis; adenosylcobalamin from cob(II)yrinate a,c-diamide: step 7/7. In terms of biological role, joins adenosylcobinamide-GDP and alpha-ribazole to generate adenosylcobalamin (Ado-cobalamin). Also synthesizes adenosylcobalamin 5'-phosphate from adenosylcobinamide-GDP and alpha-ribazole 5'-phosphate. The chain is Adenosylcobinamide-GDP ribazoletransferase from Pseudomonas fluorescens (strain ATCC BAA-477 / NRRL B-23932 / Pf-5).